Reading from the N-terminus, the 301-residue chain is Very-long-chain aldehyde decarbonylase GL1-10 (301 aa).

3 helical membrane-spanning segments follow: residues 36-56 (VLFW…PLPV), 94-114 (FFLV…MVGI), and 187-207 (SFVG…WIVL). Residues 131–265 (LVYFLVEDYL…FTYCDYLYGT (135 aa)) form the Fatty acid hydroxylase domain.

It belongs to the sterol desaturase family. As to quaternary structure, homodimer. As to expression, expressed ubiquitously.

It is found in the endoplasmic reticulum membrane. The enzyme catalyses a long-chain fatty aldehyde + 2 NADPH + O2 + H(+) = a long-chain alkane + formate + 2 NADP(+) + H2O. Aldehyde decarbonylase involved in the conversion of aldehydes to alkanes. Core component of a very-long-chain alkane synthesis complex. In Oryza sativa subsp. japonica (Rice), this protein is Very-long-chain aldehyde decarbonylase GL1-10.